The chain runs to 78 residues: Translational regulator CsrA (78 aa).

Belongs to the CsrA/RsmA family. Homodimer; the beta-strands of each monomer intercalate to form a hydrophobic core, while the alpha-helices form wings that extend away from the core.

It localises to the cytoplasm. In terms of biological role, a translational regulator that binds mRNA to regulate translation initiation and/or mRNA stability. Usually binds in the 5'-UTR at or near the Shine-Dalgarno sequence preventing ribosome-binding, thus repressing translation. Its main target seems to be the major flagellin gene, while its function is anatagonized by FliW. In Desulfotalea psychrophila (strain LSv54 / DSM 12343), this protein is Translational regulator CsrA.